The primary structure comprises 360 residues: Flavone O-methyltransferase 1 (360 aa).

A substrate-binding site is contributed by 127–133 (MNQDKVL). The tract at residues 159-177 (AFEYHGTDPRFNRVFNEGM) is substrate binding. Residues glycine 205, aspartate 228, aspartate 248, methionine 249, and lysine 262 each contribute to the S-adenosyl-L-methionine site. Catalysis depends on histidine 266, which acts as the Proton acceptor.

The protein belongs to the class I-like SAM-binding methyltransferase superfamily. Cation-independent O-methyltransferase family. COMT subfamily. Homodimer.

Functionally, flavone-specific O-methyltransferase with a preference for flavones &gt; flavonols. Active with tricetin, luteolin, quercitin and eriodictyol. Very low activity with phenylpropanoids (5-hydroxyferulic acid and caffeic acid). Catalyzes the sequential O-methylation of tricetin via 3'-O-methyltricetin, 3',5'-O-methyltricetin to 3',4',5'-O-trimethyltricetin. The protein is Flavone O-methyltransferase 1 (OMT1) of Triticum aestivum (Wheat).